Consider the following 206-residue polypeptide: Small ribosomal subunit protein uS4 (206 aa).

Residues 96 to 159 enclose the S4 RNA-binding domain; the sequence is TRLDNVVYRM…KKQARISASL (64 aa).

This sequence belongs to the universal ribosomal protein uS4 family. In terms of assembly, part of the 30S ribosomal subunit. Contacts protein S5. The interaction surface between S4 and S5 is involved in control of translational fidelity.

Functionally, one of the primary rRNA binding proteins, it binds directly to 16S rRNA where it nucleates assembly of the body of the 30S subunit. With S5 and S12 plays an important role in translational accuracy. In Shewanella violacea, this protein is Small ribosomal subunit protein uS4.